The following is a 274-amino-acid chain: Elongation factor Ts (274 aa).

Positions 79–82 (TDFV) are involved in Mg(2+) ion dislocation from EF-Tu.

This sequence belongs to the EF-Ts family.

The protein resides in the cytoplasm. Its function is as follows. Associates with the EF-Tu.GDP complex and induces the exchange of GDP to GTP. It remains bound to the aminoacyl-tRNA.EF-Tu.GTP complex up to the GTP hydrolysis stage on the ribosome. The sequence is that of Elongation factor Ts from Porphyromonas gingivalis (strain ATCC 33277 / DSM 20709 / CIP 103683 / JCM 12257 / NCTC 11834 / 2561).